The sequence spans 307 residues: D-alanine--D-alanine ligase (307 aa).

The region spanning 104 to 301 (RTAFLAAGLP…FVSLCRWMVE (198 aa)) is the ATP-grasp domain. Residue 130 to 183 (PLPRPFVIKPANEGSAVGVHILHEGDNRRTEIARSWSFGGQALVEEYIPGRELT) participates in ATP binding. Mg(2+) contacts are provided by Asp251, Glu268, and Asn270.

This sequence belongs to the D-alanine--D-alanine ligase family. Mg(2+) is required as a cofactor. The cofactor is Mn(2+).

It localises to the cytoplasm. It catalyses the reaction 2 D-alanine + ATP = D-alanyl-D-alanine + ADP + phosphate + H(+). It participates in cell wall biogenesis; peptidoglycan biosynthesis. In terms of biological role, cell wall formation. The polypeptide is D-alanine--D-alanine ligase (Granulibacter bethesdensis (strain ATCC BAA-1260 / CGDNIH1)).